Reading from the N-terminus, the 150-residue chain is C-C motif chemokine 25 (150 aa).

The signal sequence occupies residues 1–23; it reads MNLWLLACLVAGFLGAWAPAVHT. 2 disulfide bridges follow: C30–C58 and C31–C75.

It belongs to the intercrine beta (chemokine CC) family. As to expression, specifically expressed by thymic dendritic cells. High levels in thymus and small intestine.

The protein resides in the secreted. Potentially involved in T-cell development. Recombinant protein shows chemotactic activity on thymocytes, macrophages, THP-1 cells, and dendritics cells but is inactive on peripheral blood lymphocytes and neutrophils. Binds to CCR9. Isoform 2 is an antagonist of isoform 1. Binds to atypical chemokine receptor ACKR4 and mediates the recruitment of beta-arrestin (ARRB1/2) to ACKR4. The protein is C-C motif chemokine 25 (CCL25) of Homo sapiens (Human).